Here is a 316-residue protein sequence, read N- to C-terminus: Transaldolase (316 aa).

Lys-132 serves as the catalytic Schiff-base intermediate with substrate.

Belongs to the transaldolase family. Type 1 subfamily. As to quaternary structure, homodimer.

The protein localises to the cytoplasm. It catalyses the reaction D-sedoheptulose 7-phosphate + D-glyceraldehyde 3-phosphate = D-erythrose 4-phosphate + beta-D-fructose 6-phosphate. The protein operates within carbohydrate degradation; pentose phosphate pathway; D-glyceraldehyde 3-phosphate and beta-D-fructose 6-phosphate from D-ribose 5-phosphate and D-xylulose 5-phosphate (non-oxidative stage): step 2/3. Its function is as follows. Transaldolase is important for the balance of metabolites in the pentose-phosphate pathway. This is Transaldolase from Vibrio vulnificus (strain CMCP6).